We begin with the raw amino-acid sequence, 401 residues long: tRNA pseudouridine synthase Pus10 (401 aa).

One can recognise a THUMP domain in the interval 64–195 (ALAKSGHRES…DGSVSVEVMP (132 aa)).

The protein belongs to the pseudouridine synthase Pus10 family.

It carries out the reaction uridine(54) in tRNA = pseudouridine(54) in tRNA. It catalyses the reaction uridine(55) in tRNA = pseudouridine(55) in tRNA. Responsible for synthesis of pseudouridine from uracil-54 and uracil-55 in the psi GC loop of transfer RNAs. The chain is tRNA pseudouridine synthase Pus10 from Caldivirga maquilingensis (strain ATCC 700844 / DSM 13496 / JCM 10307 / IC-167).